Consider the following 461-residue polypeptide: Ribitol-5-phosphate transferase FKTN (461 aa).

The Cytoplasmic segment spans residues 1 to 7; sequence MSRINKN. Positions 6-27 are required and sufficient for interaction with POMGNT1; that stretch reads KNVVLALLTLTSSAFLLFQLYY. A helical; Signal-anchor for type II membrane protein membrane pass occupies residues 8-28; the sequence is VVLALLTLTSSAFLLFQLYYY. Residues 29–461 are Lumenal-facing; that stretch reads KHYLSARNGP…SEWDEVIQLY (433 aa). An N-linked (GlcNAc...) asparagine glycan is attached at Asn-92.

The protein belongs to the LicD transferase family. As to quaternary structure, forms a complex composed of FKTN/fukutin, FKRP and RXYLT1/TMEM5. Interacts (via transmembrane domain) with POMGNT1; the interaction is direct and is required for normal POMGNT1 location in Golgi membranes. Expressed in the retina, with highest levels found in the inner segments of photoreceptors and the outer plexiform layer (at protein level). Expressed at lower levels in the inner and outer nuclear layers, the inner plexiform layers, and the ganglion cell layers of the retina (at protein level). Expressed in the heart, brain, spleen, lung, liver, skeletal muscle, kidney and testis.

Its subcellular location is the golgi apparatus membrane. It is found in the cytoplasm. It localises to the nucleus. The protein resides in the endoplasmic reticulum. The catalysed reaction is 3-O-[beta-D-GalNAc-(1-&gt;3)-beta-D-GlcNAc-(1-&gt;4)-(O-6-P-alpha-D-Man)]-Thr-[protein] + CDP-L-ribitol = 3-O-[Rib-ol-P-3-beta-D-GalNAc-(1-&gt;3)-beta-D-GlcNAc-(1-&gt;4)-(O-6-P-alpha-D-Man)]-Thr-[protein] + CMP + H(+). It functions in the pathway protein modification; protein glycosylation. Its function is as follows. Catalyzes the transfer of CDP-ribitol to the distal N-acetylgalactosamine of the phosphorylated O-mannosyl trisaccharide (N-acetylgalactosamine-beta-3-N-acetylglucosamine-beta-4-(phosphate-6-)mannose), a carbohydrate structure present in alpha-dystroglycan (DAG1). This constitutes the first step in the formation of the ribitol 5-phosphate tandem repeat which links the phosphorylated O-mannosyl trisaccharide to the ligand binding moiety composed of repeats of 3-xylosyl-alpha-1,3-glucuronic acid-beta-1. Required for normal location of POMGNT1 in Golgi membranes, and for normal POMGNT1 activity. May interact with and reinforce a large complex encompassing the outside and inside of muscle membranes. Could be involved in brain development. This Mus musculus (Mouse) protein is Ribitol-5-phosphate transferase FKTN.